Reading from the N-terminus, the 322-residue chain is Elongation factor Ts, mitochondrial (322 aa).

This sequence belongs to the EF-Ts family.

It localises to the mitochondrion. In terms of biological role, associates with the EF-Tu.GDP complex and induces the exchange of GDP to GTP. It remains bound to the aminoacyl-tRNA.EF-Tu.GTP complex up to the GTP hydrolysis stage on the ribosome. The polypeptide is Elongation factor Ts, mitochondrial (Chlamydomonas reinhardtii (Chlamydomonas smithii)).